A 252-amino-acid chain; its full sequence is MKTVTVKNLIIGEGMPKIIVSLMGRDINSVKAEALAYREATFDILEWRVDHFMDIASTQSVLTAARVIRDAMPDIPLLFTFRSAKEGGEQTITTQHYLSLNRAAIDSGLVDMIDLELFTGDADVKATVDYAHAHNVYVVMSNHDFHQTPSAEEMVLRLRKMQALGADIPKIAVMPQSKHDVLTLLTATLEMQQHYADRPVITMSMAKEGVISRLAGEVFGSAATFGAVKQASAPGQIAVNDLRSVLMILHNA.

Residues serine 21, 46 to 48 (EWR), and arginine 82 contribute to the 3-dehydroquinate site. Histidine 143 serves as the catalytic Proton donor/acceptor. Residue lysine 170 is the Schiff-base intermediate with substrate of the active site. Arginine 213, serine 232, and glutamine 236 together coordinate 3-dehydroquinate.

This sequence belongs to the type-I 3-dehydroquinase family. In terms of assembly, homodimer.

The catalysed reaction is 3-dehydroquinate = 3-dehydroshikimate + H2O. It functions in the pathway metabolic intermediate biosynthesis; chorismate biosynthesis; chorismate from D-erythrose 4-phosphate and phosphoenolpyruvate: step 3/7. Its function is as follows. Involved in the third step of the chorismate pathway, which leads to the biosynthesis of aromatic amino acids. Catalyzes the cis-dehydration of 3-dehydroquinate (DHQ) and introduces the first double bond of the aromatic ring to yield 3-dehydroshikimate. The chain is 3-dehydroquinate dehydratase from Salmonella paratyphi A (strain ATCC 9150 / SARB42).